Consider the following 144-residue polypeptide: Nucleoside diphosphate kinase (144 aa).

Positions 11, 59, 87, 93, 104, and 114 each coordinate ATP. Residue histidine 117 is the Pros-phosphohistidine intermediate of the active site.

Belongs to the NDK family. As to quaternary structure, homotetramer. Requires Mg(2+) as cofactor.

It is found in the cytoplasm. It catalyses the reaction a 2'-deoxyribonucleoside 5'-diphosphate + ATP = a 2'-deoxyribonucleoside 5'-triphosphate + ADP. The enzyme catalyses a ribonucleoside 5'-diphosphate + ATP = a ribonucleoside 5'-triphosphate + ADP. Its function is as follows. Major role in the synthesis of nucleoside triphosphates other than ATP. The ATP gamma phosphate is transferred to the NDP beta phosphate via a ping-pong mechanism, using a phosphorylated active-site intermediate. The polypeptide is Nucleoside diphosphate kinase (Vibrio atlanticus (strain LGP32) (Vibrio splendidus (strain Mel32))).